Here is a 382-residue protein sequence, read N- to C-terminus: N-acetylglucosamine-6-phosphate deacetylase (382 aa).

Glu-131 is a binding site for a divalent metal cation. Residue 142–143 (TH) participates in substrate binding. Residues His-195 and His-216 each coordinate a divalent metal cation. Residues 219–220 (NA), Arg-227, and 248–251 (DGLH) contribute to the substrate site. The active-site Proton donor/acceptor is Asp-273. 306–308 (LSG) is a binding site for substrate.

Belongs to the metallo-dependent hydrolases superfamily. NagA family. Homotetramer. A divalent metal cation is required as a cofactor.

It catalyses the reaction N-acetyl-D-glucosamine 6-phosphate + H2O = D-glucosamine 6-phosphate + acetate. Its pathway is amino-sugar metabolism; N-acetylneuraminate degradation; D-fructose 6-phosphate from N-acetylneuraminate: step 4/5. Involved in the first committed step in the biosynthesis of amino-sugar-nucleotides. Catalyzes the hydrolysis of the N-acetyl group of N-acetylglucosamine-6-phosphate (GlcNAc-6-P) to yield glucosamine 6-phosphate and acetate. Can probably also catalyze the deacetylation of N-acetyl-D-galactosamine 6-phosphate to D-galactosamine 6-phosphate. In Escherichia coli O157:H7, this protein is N-acetylglucosamine-6-phosphate deacetylase (nagA).